We begin with the raw amino-acid sequence, 79 residues long: Sulfur carrier protein TusA (79 aa).

Catalysis depends on cysteine 17, which acts as the Cysteine persulfide intermediate.

The protein belongs to the sulfur carrier protein TusA family.

The protein resides in the cytoplasm. Its function is as follows. Sulfur carrier protein which probably makes part of a sulfur-relay system. This chain is Sulfur carrier protein TusA, found in Actinobacillus pleuropneumoniae serotype 7 (strain AP76).